The sequence spans 527 residues: T-complex protein 1 subunit delta (527 aa).

Belongs to the TCP-1 chaperonin family. Heterooligomeric complex of about 850 to 900 kDa that forms two stacked rings, 12 to 16 nm in diameter.

It is found in the cytoplasm. Its function is as follows. Molecular chaperone; assists the folding of proteins upon ATP hydrolysis. Known to play a role, in vitro, in the folding of actin and tubulin. The chain is T-complex protein 1 subunit delta (cct4) from Schizosaccharomyces pombe (strain 972 / ATCC 24843) (Fission yeast).